The following is a 562-amino-acid chain: Arginine--tRNA ligase (562 aa).

The 'HIGH' region motif lies at 126-136 (ANPTGPLNVGH).

The protein belongs to the class-I aminoacyl-tRNA synthetase family. In terms of assembly, monomer.

Its subcellular location is the cytoplasm. The enzyme catalyses tRNA(Arg) + L-arginine + ATP = L-arginyl-tRNA(Arg) + AMP + diphosphate. In Salinibacter ruber (strain DSM 13855 / M31), this protein is Arginine--tRNA ligase.